A 49-amino-acid polypeptide reads, in one-letter code: MRVNVTLACTECGDRNYITTKNKRNNPERIEMKKYCPRLNKYTLHRETK.

The protein belongs to the bacterial ribosomal protein bL33 family.

This is Large ribosomal subunit protein bL33A from Staphylococcus aureus (strain Mu3 / ATCC 700698).